Reading from the N-terminus, the 455-residue chain is UDP-glycosyltransferase 87A2 (455 aa).

Met1 carries the post-translational modification N-acetylmethionine. UDP-alpha-D-glucose-binding positions include Ser278, 327–329 (CDQ), 344–352 (HCGFNSTLE), and 366–369 (FWDQ).

It belongs to the UDP-glycosyltransferase family.

The protein is UDP-glycosyltransferase 87A2 (UGT87A2) of Arabidopsis thaliana (Mouse-ear cress).